We begin with the raw amino-acid sequence, 481 residues long: Serralysin B (481 aa).

Positions 1-15 (MQQNEKASLNTSAAA) are excised as a propeptide. Residue histidine 189 participates in Zn(2+) binding. Glutamate 190 is a catalytic residue. Positions 193 and 230 each coordinate Zn(2+). Arginine 267, glycine 269, threonine 271, aspartate 299, glycine 301, glycine 302, aspartate 304, threonine 341, glutamate 343, glycine 348, glycine 350, aspartate 352, asparagine 357, alanine 359, asparagine 361, glycine 365, glycine 366, alanine 367, glycine 368, aspartate 370, glycine 374, glycine 377, aspartate 379, glycine 383, glycine 384, alanine 385, glycine 386, aspartate 388, aspartate 397, aspartate 404, and aspartate 414 together coordinate Ca(2+). Hemolysin-type calcium-binding repeat units follow at residues 346–363 (IGGSGNDILIGNGADNIL), 364–381 (QGGAGDDVLYGSTGADTL), and 382–399 (TGGAGRDIFVYGSGQDST).

This sequence belongs to the peptidase M10B family. Ca(2+) serves as cofactor. Requires Zn(2+) as cofactor.

The protein localises to the secreted. The enzyme catalyses Preferential cleavage of bonds with hydrophobic residues in P1'.. The chain is Serralysin B (prtB) from Dickeya chrysanthemi (Pectobacterium chrysanthemi).